The primary structure comprises 704 residues: Elongation factor G (704 aa).

The tr-type G domain occupies 8–290; that stretch reads ARYRNIGISA…AVIDYLPSPV (283 aa). Residues 17 to 24, 88 to 92, and 142 to 145 contribute to the GTP site; these read AHIDAGKT, DTPGH, and NKMD. 2 positions are modified to N6-acetyllysine: Lys-504 and Lys-643.

It belongs to the TRAFAC class translation factor GTPase superfamily. Classic translation factor GTPase family. EF-G/EF-2 subfamily.

It localises to the cytoplasm. Functionally, catalyzes the GTP-dependent ribosomal translocation step during translation elongation. During this step, the ribosome changes from the pre-translocational (PRE) to the post-translocational (POST) state as the newly formed A-site-bound peptidyl-tRNA and P-site-bound deacylated tRNA move to the P and E sites, respectively. Catalyzes the coordinated movement of the two tRNA molecules, the mRNA and conformational changes in the ribosome. The sequence is that of Elongation factor G from Escherichia coli O17:K52:H18 (strain UMN026 / ExPEC).